The sequence spans 327 residues: Beta-1,4-galactosyltransferase 7 (327 aa).

Topologically, residues M1–S30 are cytoplasmic. Residues I31–L51 form a helical; Signal-anchor for type II membrane protein membrane-spanning segment. Residues S52–G327 lie on the Lumenal side of the membrane. A disordered region spans residues T61–E88. Residues P100–R104 and F139–R141 each bind UDP-alpha-D-galactose. N154 is a glycosylation site (N-linked (GlcNAc...) asparagine). UDP-alpha-D-galactose contacts are provided by residues V164–D165, Y194, and W224. D165 lines the Mn(2+) pocket. R226 to D229 contributes to the N-acetyl-D-glucosamine binding site. H257 is a binding site for Mn(2+). UDP-alpha-D-galactose contacts are provided by residues H257 to H259 and R266.

Belongs to the glycosyltransferase 7 family. Mn(2+) serves as cofactor.

Its subcellular location is the golgi apparatus. The protein resides in the golgi stack membrane. The enzyme catalyses 3-O-(beta-D-xylosyl)-L-seryl-[protein] + UDP-alpha-D-galactose = 3-O-(beta-D-galactosyl-(1-&gt;4)-beta-D-xylosyl)-L-seryl-[protein] + UDP + H(+). It functions in the pathway protein modification; protein glycosylation. In terms of biological role, required for the biosynthesis of the tetrasaccharide linkage region of proteoglycans, especially for small proteoglycans in skin fibroblasts. This Mus musculus (Mouse) protein is Beta-1,4-galactosyltransferase 7 (B4galt7).